A 485-amino-acid chain; its full sequence is MPVPPPPPPPPPPPPPPPPPLGAPPPPPLGAPPPPPPPGPPVSTDTPSLRKPDLKGRSALLADIQQGTRLRKVTQINDRSAPQIEGSKGTSKEGGAAGSNARGGNTPPALGDLFAGGFPVLRPAGQRDVSGGKSGQGPGSRAPSPRLPIKAISGPLPAPASPRLGNASETHSSARPVPPRPSVPAPPPPTPPPPPPPPLPPASPIKAQLVSPPAPPTKVNPSVVPPPLPCAPPLPPPPPTPPPLPPASALSDKAVRPQLAPLHLPPIPPPLPLLPPCGYPGLHSEPNSPAQEVREPPAPPPPPPPPPPPPLPTYASCSSRTAVAPPPLPGANNSGSETPPPLPPKSPSFQTQKALPTPPGAPGPQAILQKKRRGPGTSGGKLNPPPAPPARSPTTELSSKSQQPGGQLRNGGQHAIDDFESKFTFHSMEDFPPPDEYKPCQKIYPSKVPRSRTPGSWLQAEAAGQSSDDIKSRNSQLSLKALPVR.

Positions 1–41 (MPVPPPPPPPPPPPPPPPPPLGAPPPPPLGAPPPPPPPGPP) are enriched in pro residues. Residues 1–485 (MPVPPPPPPP…QLSLKALPVR (485 aa)) form a disordered region. Short sequence motifs (profilin-binding motif) lie at residues 3-8 (VPPPPP), 11-16 (PPPPPP), and 31-36 (APPPPP). In terms of domain architecture, WH2 spans 56-73 (GRSALLADIQQGTRLRKV). Position 57 is an asymmetric dimethylarginine (R57). An RLRK motif is present at residues 69 to 72 (RLRK). A Phosphoserine modification is found at S161. The span at 176 to 203 (PVPPRPSVPAPPPPTPPPPPPPPLPPAS) shows a compositional bias: pro residues. S211 bears the Phosphoserine mark. A compositionally biased stretch (pro residues) spans 212-246 (PPAPPTKVNPSVVPPPLPCAPPLPPPPPTPPPLPP). A compositionally biased stretch (low complexity) spans 247 to 262 (ASALSDKAVRPQLAPL). 2 stretches are compositionally biased toward pro residues: residues 263 to 278 (HLPPIPPPLPLLPPCG) and 296 to 312 (PPAPPPPPPPPPPPPLP). S392 is subject to Phosphoserine. Positions 392-405 (SPTTELSSKSQQPG) are enriched in polar residues. A compositionally biased stretch (basic and acidic residues) spans 415-439 (AIDDFESKFTFHSMEDFPPPDEYKP). The WASP-binding motif signature appears at 424–448 (TFHSMEDFPPPDEYKPCQKIYPSKV).

Interacts with WASL, and monomeric and filamentous actin. As to expression, isoform 1 is expressed in brain and testis and isoform 2 is expressed only in brain (at protein level).

The protein resides in the cytoplasm. Functionally, may be a regulator of cytoskeletal organization (Potential). May have a role in spermatogenesis. The sequence is that of WAS/WASL-interacting protein family member 3 (Wipf3) from Mus musculus (Mouse).